Consider the following 122-residue polypeptide: Fluoride-specific ion channel FluC (122 aa).

4 helical membrane passes run 6–26, 33–53, 60–80, and 101–121; these read LVVG…INLV, SISL…GLLF, GLSP…FTTF, and LNII…FIIF. 2 residues coordinate Na(+): glycine 75 and threonine 78.

It belongs to the fluoride channel Fluc/FEX (TC 1.A.43) family.

It localises to the cell inner membrane. The catalysed reaction is fluoride(in) = fluoride(out). Na(+) is not transported, but it plays an essential structural role and its presence is essential for fluoride channel function. In terms of biological role, fluoride-specific ion channel. Important for reducing fluoride concentration in the cell, thus reducing its toxicity. The polypeptide is Fluoride-specific ion channel FluC (Campylobacter jejuni subsp. jejuni serotype O:6 (strain 81116 / NCTC 11828)).